Consider the following 319-residue polypeptide: ATP-dependent 6-phosphofructokinase (319 aa).

ATP is bound at residue glycine 11. Residue 21 to 25 (RAVVR) participates in ADP binding. ATP is bound by residues 72-73 (RS) and 102-105 (GDGS). Aspartate 103 lines the Mg(2+) pocket. Residue 125 to 127 (TID) participates in substrate binding. The active-site Proton acceptor is the aspartate 127. Arginine 154 is a binding site for ADP. Substrate is bound by residues arginine 162 and 169–171 (MGR). ADP contacts are provided by residues 185-187 (GAE), arginine 211, and 213-215 (KKH). Substrate contacts are provided by residues glutamate 222, arginine 243, and 249–252 (HVQR).

It belongs to the phosphofructokinase type A (PFKA) family. ATP-dependent PFK group I subfamily. Prokaryotic clade 'B1' sub-subfamily. Homotetramer. It depends on Mg(2+) as a cofactor.

The protein localises to the cytoplasm. The catalysed reaction is beta-D-fructose 6-phosphate + ATP = beta-D-fructose 1,6-bisphosphate + ADP + H(+). Its pathway is carbohydrate degradation; glycolysis; D-glyceraldehyde 3-phosphate and glycerone phosphate from D-glucose: step 3/4. Its activity is regulated as follows. Allosterically activated by ADP and other diphosphonucleosides, and allosterically inhibited by phosphoenolpyruvate. Its function is as follows. Catalyzes the phosphorylation of D-fructose 6-phosphate to fructose 1,6-bisphosphate by ATP, the first committing step of glycolysis. This Natranaerobius thermophilus (strain ATCC BAA-1301 / DSM 18059 / JW/NM-WN-LF) protein is ATP-dependent 6-phosphofructokinase.